The following is a 296-amino-acid chain: Ribosomal protein L11 methyltransferase (296 aa).

Threonine 145, glycine 166, aspartate 188, and asparagine 230 together coordinate S-adenosyl-L-methionine.

Belongs to the methyltransferase superfamily. PrmA family.

The protein localises to the cytoplasm. The catalysed reaction is L-lysyl-[protein] + 3 S-adenosyl-L-methionine = N(6),N(6),N(6)-trimethyl-L-lysyl-[protein] + 3 S-adenosyl-L-homocysteine + 3 H(+). Methylates ribosomal protein L11. The protein is Ribosomal protein L11 methyltransferase of Photorhabdus laumondii subsp. laumondii (strain DSM 15139 / CIP 105565 / TT01) (Photorhabdus luminescens subsp. laumondii).